We begin with the raw amino-acid sequence, 178 residues long: CDP-archaeol synthase (178 aa).

5 helical membrane passes run 3–23 (LLLLLFSAIWYILPAYVANAV), 56–76 (FFGILFGIITGILQHFIVILY), 87–107 (LFGYIILSFLLASGTLFGDML), 123–145 (APILDQITFIVFALLFAYPFYPL), and 150–169 (IVLLLVISPIIHFSSNIIAY).

Belongs to the CDP-archaeol synthase family. The cofactor is Mg(2+).

Its subcellular location is the cell membrane. It catalyses the reaction 2,3-bis-O-(geranylgeranyl)-sn-glycerol 1-phosphate + CTP + H(+) = CDP-2,3-bis-O-(geranylgeranyl)-sn-glycerol + diphosphate. It functions in the pathway membrane lipid metabolism; glycerophospholipid metabolism. In terms of biological role, catalyzes the formation of CDP-2,3-bis-(O-geranylgeranyl)-sn-glycerol (CDP-archaeol) from 2,3-bis-(O-geranylgeranyl)-sn-glycerol 1-phosphate (DGGGP) and CTP. This reaction is the third ether-bond-formation step in the biosynthesis of archaeal membrane lipids. The chain is CDP-archaeol synthase from Methanococcus maripaludis (strain C6 / ATCC BAA-1332).